Here is an 875-residue protein sequence, read N- to C-terminus: Acetyl-coenzyme A carboxylase carboxyl transferase subunit alpha, chloroplastic (875 aa).

Residues 1 to 50 (MASSSATLVGSTASDLLRSSTTGFTGVPLRTLGRAGLVLKRRDLTVSVTA) constitute a chloroplast transit peptide. Residues 128–380 (EAKYQKALVE…KIAINEAMDE (253 aa)) enclose the CoA carboxyltransferase C-terminal domain. Residues 664–705 (LLLDKNKAATRKQELKKKSDEHKEAARLEQELKKKFDEVMDT) adopt a coiled-coil conformation. Positions 845-875 (KEKYENLTRPAGDTLTDDKLREKVGVNRNFS) are disordered. Residues 860–869 (TDDKLREKVG) are compositionally biased toward basic and acidic residues.

It belongs to the AccA family. In terms of assembly, acetyl-CoA carboxylase is a heterohexamer composed of biotin carboxyl carrier protein, biotin carboxylase and two subunits each of ACCase subunit alpha and ACCase plastid-coded subunit beta (accD).

The protein localises to the plastid. Its subcellular location is the chloroplast inner membrane. It carries out the reaction N(6)-carboxybiotinyl-L-lysyl-[protein] + acetyl-CoA = N(6)-biotinyl-L-lysyl-[protein] + malonyl-CoA. It functions in the pathway lipid metabolism; malonyl-CoA biosynthesis; malonyl-CoA from acetyl-CoA: step 1/1. With respect to regulation, activated by reductants such as dithiothreitol (DTT), and by thioredoxin in vivo, following exposure to light. In terms of biological role, component of the acetyl coenzyme A carboxylase (ACC) complex. First, biotin carboxylase catalyzes the carboxylation of biotin on its carrier protein (BCCP) and then the CO(2) group is transferred by the carboxyltransferase to acetyl-CoA to form malonyl-CoA. The protein is Acetyl-coenzyme A carboxylase carboxyl transferase subunit alpha, chloroplastic (ACCA) of Pisum sativum (Garden pea).